We begin with the raw amino-acid sequence, 162 residues long: 2-C-methyl-D-erythritol 2,4-cyclodiphosphate synthase (162 aa).

A divalent metal cation is bound by residues aspartate 12 and histidine 14. 4-CDP-2-C-methyl-D-erythritol 2-phosphate is bound by residues aspartate 12–histidine 14 and histidine 38–serine 39. Histidine 46 is a binding site for a divalent metal cation. 4-CDP-2-C-methyl-D-erythritol 2-phosphate is bound by residues aspartate 60–glycine 62, phenylalanine 65–aspartate 69, and arginine 146.

Belongs to the IspF family. As to quaternary structure, homotrimer. It depends on a divalent metal cation as a cofactor.

The catalysed reaction is 4-CDP-2-C-methyl-D-erythritol 2-phosphate = 2-C-methyl-D-erythritol 2,4-cyclic diphosphate + CMP. Its pathway is isoprenoid biosynthesis; isopentenyl diphosphate biosynthesis via DXP pathway; isopentenyl diphosphate from 1-deoxy-D-xylulose 5-phosphate: step 4/6. Its function is as follows. Involved in the biosynthesis of isopentenyl diphosphate (IPP) and dimethylallyl diphosphate (DMAPP), two major building blocks of isoprenoid compounds. Catalyzes the conversion of 4-diphosphocytidyl-2-C-methyl-D-erythritol 2-phosphate (CDP-ME2P) to 2-C-methyl-D-erythritol 2,4-cyclodiphosphate (ME-CPP) with a corresponding release of cytidine 5-monophosphate (CMP). This chain is 2-C-methyl-D-erythritol 2,4-cyclodiphosphate synthase, found in Bordetella parapertussis (strain 12822 / ATCC BAA-587 / NCTC 13253).